We begin with the raw amino-acid sequence, 131 residues long: Synaptobrevin-like protein (131 aa).

The Cytoplasmic segment spans residues 1 to 81; that stretch reads MLHITTMTDK…KRKFWWKNCK (81 aa). The 61-residue stretch at 18–78 folds into the v-SNARE coiled-coil homology domain; it reads RLQQTQAQVN…GKLKRKFWWK (61 aa). Residues 82–102 traverse the membrane as a helical; Anchor for type IV membrane protein segment; that stretch reads MLAVLGVLVVILIIVLIVWVV. The Vesicular portion of the chain corresponds to 103–131; the sequence is SEQKNKVEQSEHSSHHLVMDNSSHLLSEQ. A disordered region spans residues 112–131; sequence SEHSSHHLVMDNSSHLLSEQ. Residues 122–131 show a composition bias toward polar residues; the sequence is DNSSHLLSEQ.

The protein belongs to the synaptobrevin family.

It is found in the cytoplasmic vesicle. The protein localises to the secretory vesicle. The protein resides in the synaptic vesicle membrane. It localises to the synapse. Its subcellular location is the synaptosome. Functionally, unknown, but synaptobrevins are presumed to be involved in targeting and fusion of synaptic vesicles with the presynaptic membrane as well as in neurotransmitter release. The chain is Synaptobrevin-like protein from Schistosoma mansoni (Blood fluke).